The chain runs to 109 residues: Nucleoid-associated protein PM0205 (109 aa).

Belongs to the YbaB/EbfC family. Homodimer.

The protein localises to the cytoplasm. It is found in the nucleoid. Functionally, binds to DNA and alters its conformation. May be involved in regulation of gene expression, nucleoid organization and DNA protection. This is Nucleoid-associated protein PM0205 from Pasteurella multocida (strain Pm70).